The following is a 339-amino-acid chain: Type IV secretion system protein PtlH homolog (339 aa).

It belongs to the GSP E family.

This Bordetella parapertussis (strain 12822 / ATCC BAA-587 / NCTC 13253) protein is Type IV secretion system protein PtlH homolog (ptlH).